Consider the following 561-residue polypeptide: Carboxylesterase 1F (561 aa).

An N-terminal signal peptide occupies residues 1-17 (MFLSTLFLVSLATCVIC). Cys87 and Cys116 are disulfide-bonded. Ser221 serves as the catalytic Acyl-ester intermediate. Cysteines 273 and 284 form a disulfide. Catalysis depends on charge relay system residues Glu353 and His466. Residues 558 to 561 (HNEL) carry the Prevents secretion from ER motif.

The protein belongs to the type-B carboxylesterase/lipase family. Expressed in liver, white and brown adipose tissue, kidney, intestine, adrenal, heart and ovary. Not detected in muscle, lung, testis, brain and spleen.

Its subcellular location is the lipid droplet. It localises to the cytoplasm. The protein resides in the cytosol. The protein localises to the endoplasmic reticulum. It is found in the microsome. The enzyme catalyses a carboxylic ester + H2O = an alcohol + a carboxylate + H(+). It carries out the reaction all-trans-retinyl hexadecanoate + H2O = all-trans-retinol + hexadecanoate + H(+). In terms of biological role, involved in the detoxification of xenobiotics and in the activation of ester and amide prodrugs. Hydrolyzes retinyl esters. Hydrolyzes p-nitrophenyl butyrate (PNPB), triacylglycerol and monoacylglycerol. Shows higher activity against PNPB, a short-chain fatty acid ester, than against triolein, a long-chain fatty acid ester. Shows no detectable activity against diacylglycerol, cholesterol ester or phospholipids. May play a role in adipocyte lipolysis. In Mus musculus (Mouse), this protein is Carboxylesterase 1F.